The primary structure comprises 263 residues: Aminoglycoside (3'') (9) adenylyltransferase (263 aa).

The catalysed reaction is streptomycin + ATP = 3''-O-adenylylstreptomycin + diphosphate. The enzyme catalyses spectinomycin + ATP = 9-O-adenylylspectinomycin + diphosphate. Its function is as follows. Mediates bacterial resistance to the antibiotics streptomycin and spectinomycin. This chain is Aminoglycoside (3'') (9) adenylyltransferase, found in Escherichia coli.